The sequence spans 354 residues: MTLLKNDTFLRALLKQPVEYTPIWMMRQAGRYLPEYKATRTKAGSFLDLCKNTGLATEVTIQPLERFDLDAAILFSDILTVPDAMGLGLYFAEGEGPKFKRALQHESDIAKLHVPDMEKLQYVFDAVTSIRKALDGRVPLIGFSGSPFTLACYMVEGGGSKEFRTIKTMMYSRPDLLYKILDTNAQAVTAYLNAQIDAGAQAVQIFDTWGGVLSDAAFKEFSLKYIRQIVAGLKRESEGRRVPVIVFAKGGGLWLESMAQIGADALGLDWTCNIGEARRRVGNQVALQGNFDPSALFGTPESIRTEVARILTGYGHGSGHVFNLGHGINQHADPEHAKILVDTVHELSRQYHGG.

Residues 27–31, Asp77, Tyr153, Thr208, and His326 contribute to the substrate site; that span reads RQAGR.

This sequence belongs to the uroporphyrinogen decarboxylase family. In terms of assembly, homodimer.

The protein localises to the cytoplasm. The enzyme catalyses uroporphyrinogen III + 4 H(+) = coproporphyrinogen III + 4 CO2. It participates in porphyrin-containing compound metabolism; protoporphyrin-IX biosynthesis; coproporphyrinogen-III from 5-aminolevulinate: step 4/4. Functionally, catalyzes the decarboxylation of four acetate groups of uroporphyrinogen-III to yield coproporphyrinogen-III. The polypeptide is Uroporphyrinogen decarboxylase (Neisseria gonorrhoeae (strain ATCC 700825 / FA 1090)).